The chain runs to 188 residues: ATP synthase subunit b 1 (188 aa).

Residues 7-27 traverse the membrane as a helical segment; it reads LSVLALAMLAANPAFAAGGGI.

It belongs to the ATPase B chain family. F-type ATPases have 2 components, F(1) - the catalytic core - and F(0) - the membrane proton channel. F(1) has five subunits: alpha(3), beta(3), gamma(1), delta(1), epsilon(1). F(0) has three main subunits: a(1), b(2) and c(10-14). The alpha and beta chains form an alternating ring which encloses part of the gamma chain. F(1) is attached to F(0) by a central stalk formed by the gamma and epsilon chains, while a peripheral stalk is formed by the delta and b chains.

Its subcellular location is the cell inner membrane. In terms of biological role, f(1)F(0) ATP synthase produces ATP from ADP in the presence of a proton or sodium gradient. F-type ATPases consist of two structural domains, F(1) containing the extramembraneous catalytic core and F(0) containing the membrane proton channel, linked together by a central stalk and a peripheral stalk. During catalysis, ATP synthesis in the catalytic domain of F(1) is coupled via a rotary mechanism of the central stalk subunits to proton translocation. Its function is as follows. Component of the F(0) channel, it forms part of the peripheral stalk, linking F(1) to F(0). In Roseobacter denitrificans (strain ATCC 33942 / OCh 114) (Erythrobacter sp. (strain OCh 114)), this protein is ATP synthase subunit b 1.